Reading from the N-terminus, the 146-residue chain is Large ribosomal subunit protein uL11 (146 aa).

This sequence belongs to the universal ribosomal protein uL11 family. In terms of assembly, part of the ribosomal stalk of the 50S ribosomal subunit. Interacts with L10 and the large rRNA to form the base of the stalk. L10 forms an elongated spine to which L12 dimers bind in a sequential fashion forming a multimeric L10(L12)X complex. One or more lysine residues are methylated.

Functionally, forms part of the ribosomal stalk which helps the ribosome interact with GTP-bound translation factors. This Wolbachia pipientis wMel protein is Large ribosomal subunit protein uL11.